The primary structure comprises 1286 residues: DNA-directed RNA polymerase subunit beta' (1286 aa).

Cys58, Cys60, Cys73, and Cys76 together coordinate Zn(2+). Asp533, Asp535, and Asp537 together coordinate Mg(2+). Positions 867, 944, 951, and 954 each coordinate Zn(2+).

It belongs to the RNA polymerase beta' chain family. The RNAP catalytic core consists of 2 alpha, 1 beta, 1 beta' and 1 omega subunit. When a sigma factor is associated with the core the holoenzyme is formed, which can initiate transcription. Mg(2+) is required as a cofactor. The cofactor is Zn(2+).

It catalyses the reaction RNA(n) + a ribonucleoside 5'-triphosphate = RNA(n+1) + diphosphate. Functionally, DNA-dependent RNA polymerase catalyzes the transcription of DNA into RNA using the four ribonucleoside triphosphates as substrates. This chain is DNA-directed RNA polymerase subunit beta', found in Tropheryma whipplei (strain TW08/27) (Whipple's bacillus).